The sequence spans 249 residues: Methylthioribulose-1-phosphate dehydratase (249 aa).

Residues His-103 and His-105 each contribute to the Zn(2+) site.

Belongs to the aldolase class II family. MtnB subfamily. The cofactor is Zn(2+).

The catalysed reaction is 5-(methylsulfanyl)-D-ribulose 1-phosphate = 5-methylsulfanyl-2,3-dioxopentyl phosphate + H2O. The protein operates within amino-acid biosynthesis; L-methionine biosynthesis via salvage pathway; L-methionine from S-methyl-5-thio-alpha-D-ribose 1-phosphate: step 2/6. Its function is as follows. Catalyzes the dehydration of methylthioribulose-1-phosphate (MTRu-1-P) into 2,3-diketo-5-methylthiopentyl-1-phosphate (DK-MTP-1-P). The polypeptide is Methylthioribulose-1-phosphate dehydratase (Leptospira interrogans serogroup Icterohaemorrhagiae serovar Lai (strain 56601)).